A 679-amino-acid chain; its full sequence is UvrABC system protein B (679 aa).

Positions 25–176 (EGVNGGERYQ…NLRGSLRDLV (152 aa)) constitute a Helicase ATP-binding domain. Position 38 to 45 (38 to 45 (GATGTGKT)) interacts with ATP. Positions 91–114 (YYDYYQPEAYVPVSDTYIAKTASI) match the Beta-hairpin motif. One can recognise a Helicase C-terminal domain in the interval 429–591 (QVDDLLGEIR…ITPTAAGKKA (163 aa)). The UVR domain maps to 638–673 (PELIDQLELKMKESAKKLDFEEAANLRDRIKKLRQK).

The protein belongs to the UvrB family. In terms of assembly, forms a heterotetramer with UvrA during the search for lesions. Interacts with UvrC in an incision complex.

The protein resides in the cytoplasm. Its function is as follows. The UvrABC repair system catalyzes the recognition and processing of DNA lesions. A damage recognition complex composed of 2 UvrA and 2 UvrB subunits scans DNA for abnormalities. Upon binding of the UvrA(2)B(2) complex to a putative damaged site, the DNA wraps around one UvrB monomer. DNA wrap is dependent on ATP binding by UvrB and probably causes local melting of the DNA helix, facilitating insertion of UvrB beta-hairpin between the DNA strands. Then UvrB probes one DNA strand for the presence of a lesion. If a lesion is found the UvrA subunits dissociate and the UvrB-DNA preincision complex is formed. This complex is subsequently bound by UvrC and the second UvrB is released. If no lesion is found, the DNA wraps around the other UvrB subunit that will check the other stand for damage. The sequence is that of UvrABC system protein B from Synechococcus sp. (strain CC9311).